A 291-amino-acid chain; its full sequence is 4-hydroxy-tetrahydrodipicolinate synthase (291 aa).

Threonine 45 provides a ligand contact to pyruvate. The active-site Proton donor/acceptor is the tyrosine 131. The active-site Schiff-base intermediate with substrate is lysine 159. Isoleucine 202 is a binding site for pyruvate.

The protein belongs to the DapA family. Homotetramer; dimer of dimers.

It is found in the cytoplasm. The catalysed reaction is L-aspartate 4-semialdehyde + pyruvate = (2S,4S)-4-hydroxy-2,3,4,5-tetrahydrodipicolinate + H2O + H(+). It participates in amino-acid biosynthesis; L-lysine biosynthesis via DAP pathway; (S)-tetrahydrodipicolinate from L-aspartate: step 3/4. Catalyzes the condensation of (S)-aspartate-beta-semialdehyde [(S)-ASA] and pyruvate to 4-hydroxy-tetrahydrodipicolinate (HTPA). The protein is 4-hydroxy-tetrahydrodipicolinate synthase of Methanosarcina mazei (strain ATCC BAA-159 / DSM 3647 / Goe1 / Go1 / JCM 11833 / OCM 88) (Methanosarcina frisia).